Reading from the N-terminus, the 146-residue chain is Protein ADM2 (146 aa).

The N-terminal stretch at 1–25 (MAQLLMVTVTFGCISLLYLLPGTLS) is a signal peptide. The propeptide occupies 26-96 (GSLGKGLRPR…HPGPQRHVGS (71 aa)). The disordered stretch occupies residues 29–99 (GKGLRPREPP…PQRHVGSRRP (71 aa)). Cysteine 108 and cysteine 113 form a disulfide bridge. Tyrosine 145 bears the Tyrosine amide mark.

The protein belongs to the adrenomedullin family. As to expression, expression was restricted to the intermediate and anterior lobes of the pituitary.

It localises to the secreted. In terms of biological role, intermedin/ADM2 is a peptide hormone that plays a role as physiological regulator of gastrointestinal and cardiovascular bioactivities mediated by the CALCRL-RAMPs receptor complexes. Activates the cAMP-dependent pathway through interaction with CALCRL-RAMP3 receptor complex. The sequence is that of Protein ADM2 from Rattus norvegicus (Rat).